A 246-amino-acid polypeptide reads, in one-letter code: Deoxycytidylate 5-hydroxymethyltransferase (246 aa).

C148 is a catalytic residue.

Belongs to the thymidylate synthase family.

It carries out the reaction dCMP + (6R)-5,10-methylene-5,6,7,8-tetrahydrofolate + H2O = 5-hydroxymethyl-dCMP + (6S)-5,6,7,8-tetrahydrofolate. This Escherichia coli (Bacteriophage T2) protein is Deoxycytidylate 5-hydroxymethyltransferase (42).